The primary structure comprises 176 residues: Disulfide bond formation protein B (176 aa).

The Cytoplasmic segment spans residues 1–14 (MLRFLNQCSHGRGA). The helical transmembrane segment at 15 to 31 (WLLMAFTALALELTALW) threads the bilayer. The Periplasmic portion of the chain corresponds to 32-49 (FQHVMLLKPCVLCIYERC). Cys41 and Cys44 are disulfide-bonded. Residues 50–65 (ALFGVLGAALIGAIAP) form a helical membrane-spanning segment. At 66–71 (KTPLRY) the chain is on the cytoplasmic side. The chain crosses the membrane as a helical span at residues 72-89 (VAMVIWLYSAFRGVQLTY). Residues 90 to 144 (EHTMLQLYPSPFATCDFMARFPEWLPLDKWVPQVFVASGDCAERQWEFLGLEMPQ) lie on the Periplasmic side of the membrane. Residues Cys104 and Cys130 are joined by a disulfide bond. The chain crosses the membrane as a helical span at residues 145 to 163 (WLLGIFIAYLIVAVLVVIS). Residues 164 to 176 (QPFKAKKRDLFGR) are Cytoplasmic-facing.

Belongs to the DsbB family.

The protein resides in the cell inner membrane. Functionally, required for disulfide bond formation in some periplasmic proteins. Acts by oxidizing the DsbA protein. This is Disulfide bond formation protein B from Escherichia coli O6:K15:H31 (strain 536 / UPEC).